The sequence spans 203 residues: ATP-dependent Clp protease proteolytic subunit 1 (203 aa).

The active-site Nucleophile is Ser103. The active site involves His128.

This sequence belongs to the peptidase S14 family. Fourteen ClpP subunits assemble into 2 heptameric rings which stack back to back to give a disk-like structure with a central cavity, resembling the structure of eukaryotic proteasomes.

The protein resides in the cytoplasm. It catalyses the reaction Hydrolysis of proteins to small peptides in the presence of ATP and magnesium. alpha-casein is the usual test substrate. In the absence of ATP, only oligopeptides shorter than five residues are hydrolyzed (such as succinyl-Leu-Tyr-|-NHMec, and Leu-Tyr-Leu-|-Tyr-Trp, in which cleavage of the -Tyr-|-Leu- and -Tyr-|-Trp bonds also occurs).. Functionally, cleaves peptides in various proteins in a process that requires ATP hydrolysis. Has a chymotrypsin-like activity. Plays a major role in the degradation of misfolded proteins. The sequence is that of ATP-dependent Clp protease proteolytic subunit 1 from Treponema pallidum (strain Nichols).